The sequence spans 997 residues: Translation initiation factor IF-2 (997 aa).

The interval 101–409 (ELAAEQAAAR…QHQDRRHEQV (309 aa)) is disordered. 3 stretches are compositionally biased toward low complexity: residues 116-185 (AEAV…QAEP), 195-208 (AAPAQAVAEPVEPA), and 244-280 (PSAPAESPKSAKAEPAAAPKTTAKPGEIRRAAAPAAP). Basic and acidic residues predominate over residues 281–292 (DRAREEARRAAE). Gly residues predominate over residues 385 to 394 (RAGGKGGRGG). Over residues 400–409 (QHQDRRHEQV) the composition is skewed to basic and acidic residues. A tr-type G domain is found at 498 to 665 (PRAPVVTVMG…NVLLQAEILE (168 aa)). The tract at residues 507–514 (GHVDHGKT) is G1. 507–514 (GHVDHGKT) is a binding site for GTP. The interval 532–536 (GITQH) is G2. Positions 553–556 (DTPG) are G3. Residues 553 to 557 (DTPGH) and 607 to 610 (NKID) each bind GTP. Residues 607-610 (NKID) are G4. The G5 stretch occupies residues 643–645 (SAK).

It belongs to the TRAFAC class translation factor GTPase superfamily. Classic translation factor GTPase family. IF-2 subfamily.

The protein resides in the cytoplasm. Its function is as follows. One of the essential components for the initiation of protein synthesis. Protects formylmethionyl-tRNA from spontaneous hydrolysis and promotes its binding to the 30S ribosomal subunits. Also involved in the hydrolysis of GTP during the formation of the 70S ribosomal complex. The protein is Translation initiation factor IF-2 of Bordetella bronchiseptica (strain ATCC BAA-588 / NCTC 13252 / RB50) (Alcaligenes bronchisepticus).